The sequence spans 38 residues: Beta-defensin 1 (38 aa).

3 disulfide bridges follow: Cys5/Cys34, Cys12/Cys27, and Cys17/Cys35.

Belongs to the beta-defensin family. In terms of assembly, monomer. Homodimer. Neutrophilic granules.

It is found in the secreted. It localises to the membrane. Functionally, has bactericidal activity. Active against E.coli ML35 but not against S.aureus 502A. May act as a ligand for C-C chemokine receptor CCR6. Positively regulates the sperm motility and bactericidal activity in a CCR6-dependent manner. Binds to CCR6 and triggers Ca2+ mobilization in the sperm which is important for its motility. The polypeptide is Beta-defensin 1 (DEFB1) (Bos taurus (Bovine)).